Consider the following 229-residue polypeptide: Ribonuclease 3 (229 aa).

One can recognise an RNase III domain in the interval 4–133 (WEELQESVGF…FIGALYLDNG (130 aa)). Residue Glu46 participates in Mg(2+) binding. Asp50 is an active-site residue. 2 residues coordinate Mg(2+): Asp119 and Glu122. Glu122 is a catalytic residue. A DRBM domain is found at 159–228 (DYKTQLQEIV…AQFAINQLTH (70 aa)).

It belongs to the ribonuclease III family. As to quaternary structure, homodimer. Mg(2+) serves as cofactor.

It is found in the cytoplasm. The enzyme catalyses Endonucleolytic cleavage to 5'-phosphomonoester.. In terms of biological role, digests double-stranded RNA. Involved in the processing of primary rRNA transcript to yield the immediate precursors to the large and small rRNAs (23S and 16S). Processes some mRNAs, and tRNAs when they are encoded in the rRNA operon. Processes pre-crRNA and tracrRNA of type II CRISPR loci if present in the organism. This is Ribonuclease 3 from Listeria monocytogenes serotype 4a (strain HCC23).